Here is a 108-residue protein sequence, read N- to C-terminus: UPF0145 protein HDEF_1024 (108 aa).

Belongs to the UPF0145 family.

This chain is UPF0145 protein HDEF_1024, found in Hamiltonella defensa subsp. Acyrthosiphon pisum (strain 5AT).